Here is a 35-residue protein sequence, read N- to C-terminus: Cecropin-A (35 aa).

A Leucine amide modification is found at Leu-35.

Monomer. As to expression, hemolymph.

The protein resides in the secreted. Cecropins have lytic and antibacterial activity against several Gram-positive and Gram-negative bacteria. Also has activity against fungi. This chain is Cecropin-A, found in Heliothis virescens (Tobacco budworm moth).